Reading from the N-terminus, the 495-residue chain is Neuronal acetylcholine receptor subunit beta-4 (495 aa).

The signal sequence occupies residues 1 to 20; that stretch reads MRGTPLLLVSLFALLQPGDC. The Extracellular segment spans residues 21–235; sequence RLANAEEKLM…IIKRKPLFYT (215 aa). N-linked (GlcNAc...) asparagine glycosylation is found at Asn35, Asn92, Asn137, and Asn165. A disulfide bond links Cys152 and Cys166. A helical membrane pass occupies residues 236–256; the sequence is INLIIPCVLITSLAILVFYLP. Topologically, residues 257 to 264 are cytoplasmic; that stretch reads SDCGEKMT. Residue Glu261 coordinates Na(+). Residues 265–285 traverse the membrane as a helical segment; it reads LCISVLLALTFFLLLISKIVP. Topologically, residues 286–297 are extracellular; it reads PTSLDIPLIGKY. The helical transmembrane segment at 298 to 318 threads the bilayer; the sequence is LLFTMVLVTFSIVTTVCVLNV. Residues 319 to 463 are Cytoplasmic-facing; that stretch reads HHRSPSTHTM…WKFVAMVVDR (145 aa). Residues 464 to 484 form a helical membrane-spanning segment; it reads LFLWVFVIVCILGTMGLFLPP. Residues 485–495 are Extracellular-facing; that stretch reads LFQIHAPSKGL.

This sequence belongs to the ligand-gated ion channel (TC 1.A.9) family. Acetylcholine receptor (TC 1.A.9.1) subfamily. Beta-4/CHRNB4 sub-subfamily. As to quaternary structure, neuronal AChR is composed of two different types of subunits: alpha and beta. CHRNB4/Beta-4 subunit can be combined to CHRNA2/alpha-2, CHRNA3/alpha-3 or CHRNA4/alpha-4, CHRNA5/alpha-5 and CHRNB3/beta-3 to give rise to functional receptors. Forms stoichiometries such as (CHRNA3)2:(CHRNB4)3 or (CHRNA3:CHRNB4)2:CHRNB3. Interacts with RIC3; which is required for proper folding and assembly. Interacts with LYPD6. As to expression, predominantly expressed by immature T-cells in the thymus.

Its subcellular location is the synaptic cell membrane. It localises to the cell membrane. The enzyme catalyses K(+)(in) = K(+)(out). It carries out the reaction Na(+)(in) = Na(+)(out). It catalyses the reaction Ca(2+)(in) = Ca(2+)(out). Activated by a myriad of ligands such as acetylcholine, cytisine, nicotine, choline and epibatidine. The heteropentamer CHRNA3:CHRNB4 activity is blocked by the alpha-conotoxin ImI and AuIB. Functionally, component of neuronal acetylcholine receptors (nAChRs) that function as pentameric, ligand-gated cation channels with high calcium permeability among other activities. nAChRs are excitatory neurotrasnmitter receptors formed by a collection of nAChR subunits known to mediate synaptic transmission in the nervous system and the neuromuscular junction. Each nAchR subunit confers differential attributes to channel properties, including activation, deactivation and desensitization kinetics, pH sensitivity, cation permeability, and binding to allosteric modulators. CHRNB4 forms heteropentameric neuronal acetylcholine receptors with CHRNA2, CHRNA3 and CHRNA4, as well as CHRNA5 and CHRNB3 as accesory subunits. CHRNA3:CHRNB4 being predominant in neurons of the autonomic ganglia, it is known as ganglionic nicotinic receptor. CHRNA3:CHRNB4 or CHRNA3:CHRNA5:CHRNB4 play also an important role in the habenulo-interpeduncular tract, modulating the mesolimbic dopamine system and affecting reward circuits and addiction. Hypothalamic CHRNA3:CHRNB4 nAChR activation by nicotine leads to activation of POMC neurons and a decrease in food intake. The protein is Neuronal acetylcholine receptor subunit beta-4 (Chrnb4) of Mus musculus (Mouse).